A 215-amino-acid chain; its full sequence is Vesicle-trafficking protein SEC22b (215 aa).

Residues 1–194 (MVLLTMIARV…KYLNMRSTYA (194 aa)) are Cytoplasmic-facing. Residues 6–119 (MIARVADGLP…YSFIEFDTFI (114 aa)) enclose the Longin domain. An N6-acetyllysine modification is found at Lys-38. One can recognise a v-SNARE coiled-coil homology domain in the interval 134–194 (NLGSINTELQ…KYLNMRSTYA (61 aa)). Position 137 is a phosphoserine (Ser-137). Residue Thr-140 is modified to Phosphothreonine. Ser-164, Ser-168, Ser-174, and Ser-177 each carry phosphoserine. A helical; Anchor for type IV membrane protein membrane pass occupies residues 195–215 (KLAAVAVFFIMLIVYVRFWWL).

The protein belongs to the synaptobrevin family. In terms of assembly, interacts with STX17. Component of two distinct SNARE complexes consisting of STX5, GOSR2/BOS1, BET1 and SEC22B or STX18, USE1L, BNIP1/SEC20L and SEC22B. YKT6 can probably replace SEC22B as subunit of either complex. Interacts with the COPII Sec23/24 complex composed of SEC23A and SEC24A; recruits SEC22B into COPII-coated vesicles to allow its transport from the endoplasmic reticulum to the Golgi. Interacts with BET1.

Its subcellular location is the endoplasmic reticulum membrane. It is found in the endoplasmic reticulum-Golgi intermediate compartment membrane. It localises to the golgi apparatus. The protein localises to the cis-Golgi network membrane. The protein resides in the trans-Golgi network membrane. Its subcellular location is the melanosome. SNARE involved in targeting and fusion of ER-derived transport vesicles with the Golgi complex as well as Golgi-derived retrograde transport vesicles with the ER. The protein is Vesicle-trafficking protein SEC22b (Sec22b) of Cricetulus griseus (Chinese hamster).